A 741-amino-acid polypeptide reads, in one-letter code: NUT family member 2G (741 aa).

5 disordered regions span residues 172–200, 293–375, 391–424, 496–624, and 638–741; these read PGNAGPWPQGAHGEGSLAPSQAKARPDDS, IQKS…PEEI, LGSHPGDTGEPEGQREKGKVEQPQEEDGMTSDPG, RAAP…LPGM, and RLSQ…HCSQ. Positions 304-321 are enriched in pro residues; sequence SLPPPAPPRLEPRGPPAP. Residues 402-412 are compositionally biased toward basic and acidic residues; it reads EGQREKGKVEQ. A compositionally biased stretch (polar residues) spans 528-545; the sequence is QRVSVETSPPQTAAQDPQ. Over residues 639–650 the composition is skewed to low complexity; the sequence is LSQSPVPSSGLL. A compositionally biased stretch (basic residues) spans 731-741; sequence SRRKKKRHCSQ.

The protein belongs to the NUT family.

This is NUT family member 2G (NUTM2G) from Homo sapiens (Human).